The sequence spans 83 residues: Type 3 secretion system needle filament protein (83 aa).

It belongs to the SctF family. In terms of assembly, the core secretion machinery of the T3SS is composed of approximately 20 different proteins, including cytoplasmic components, a base, an export apparatus and a needle. This subunit polymerizes and forms the helical needle filament. Interacts with the needle tip protein IpaD/SctA. Interacts with the export apparatus components SpaP/SctR, SpaQ/SctS and SpaR/SctT.

Its subcellular location is the secreted. The protein resides in the cell surface. Component of the type III secretion system (T3SS), also called injectisome, which is used to inject bacterial effector proteins into eukaryotic host cells. MxiH/SctF forms the external needle filament that protrudes from the bacterial surface. Functionally, during infection, can induce innate immune responses. The needle proteins interact with host TLR2 or TLR4, and induce signaling by NF-kappa-B and/or AP-1. This activation is MyD88 dependent and results in increased expression of cytokines, including TNF-alpha, IL-6 and IL-8. This Shigella flexneri protein is Type 3 secretion system needle filament protein.